We begin with the raw amino-acid sequence, 505 residues long: Maturase K (505 aa).

The protein belongs to the intron maturase 2 family. MatK subfamily.

The protein localises to the plastid. The protein resides in the chloroplast. Functionally, usually encoded in the trnK tRNA gene intron. Probably assists in splicing its own and other chloroplast group II introns. This chain is Maturase K, found in Silene otites (Spanish catchfly).